The sequence spans 424 residues: Putative histone deacetylase complex subunit cti6 (424 aa).

4 disordered regions span residues 1 to 49 (MPSN…GEVT), 117 to 155 (SKYLGNGKPIEASQTEESSSTPPSPATKKSSKQRLTMNS), 170 to 341 (KEKS…PDGT), and 381 to 405 (AQSAGNQSSTKSSKEGPEEEKETLR). The PHD-type zinc finger occupies 48–103 (VTRCVCGIVESDDEASDGGLYIQCDQCSVWQHGNCVGFADESEVPEVYYCEICHPE). Over residues 127 to 137 (EASQTEESSST) the composition is skewed to low complexity. Ser-187 bears the Phosphoserine mark. A compositionally biased stretch (acidic residues) spans 241 to 256 (DAPEEETVDTVEEIAD). Positions 257–266 (EEKHSVKEES) are enriched in basic and acidic residues. Residues 272 to 287 (QSSQQSTITSISTTTR) are compositionally biased toward low complexity. Residues 294-303 (REAAAEDKAD) show a composition bias toward basic and acidic residues. Positions 313-324 (SKTRKVGGRRGK) are enriched in basic residues. Residues 392 to 405 (SSKEGPEEEKETLR) are compositionally biased toward basic and acidic residues.

Its subcellular location is the cytoplasm. It is found in the nucleus. In terms of biological role, could be a component of the RPD3C(L) histone deacetylase complex (HDAC). The protein is Putative histone deacetylase complex subunit cti6 (cti6) of Schizosaccharomyces pombe (strain 972 / ATCC 24843) (Fission yeast).